The primary structure comprises 600 residues: Elongation factor 4 (600 aa).

The 183-residue stretch at 4 to 186 folds into the tr-type G domain; the sequence is DTIRNFSIIA…EIVKKIPPPE (183 aa). Residues 16–21 and 133–136 each bind GTP; these read DHGKST and NKID.

This sequence belongs to the TRAFAC class translation factor GTPase superfamily. Classic translation factor GTPase family. LepA subfamily.

The protein resides in the cell inner membrane. The catalysed reaction is GTP + H2O = GDP + phosphate + H(+). Functionally, required for accurate and efficient protein synthesis under certain stress conditions. May act as a fidelity factor of the translation reaction, by catalyzing a one-codon backward translocation of tRNAs on improperly translocated ribosomes. Back-translocation proceeds from a post-translocation (POST) complex to a pre-translocation (PRE) complex, thus giving elongation factor G a second chance to translocate the tRNAs correctly. Binds to ribosomes in a GTP-dependent manner. This chain is Elongation factor 4, found in Geobacter sulfurreducens (strain ATCC 51573 / DSM 12127 / PCA).